Here is a 510-residue protein sequence, read N- to C-terminus: Solute carrier family 2, facilitated glucose transporter member 2 (510 aa).

Topologically, residues 1–10 (MTEDKVTGTL) are cytoplasmic. The chain crosses the membrane as a helical span at residues 11 to 31 (VLAVFTAVLSSFQFGYDIGVI). Residues 32-96 (NAPQQVIITH…SASLITMFWS (65 aa)) are Extracellular-facing. An N-linked (GlcNAc...) asparagine glycan is attached at Asn-62. Residues 97-117 (LSVSSFAVGGMIASFFGGLLG) form a helical membrane-spanning segment. The Cytoplasmic portion of the chain corresponds to 118 to 122 (DKLGR). The helical transmembrane segment at 123 to 143 (IKALLVANILSLVGALLMGFS) threads the bilayer. Over 144-157 (KLGPSHILIISGRG) the chain is Extracellular. Residues 158-178 (ISGLYCGLISGLIPMYIGEIA) form a helical membrane-spanning segment. Topologically, residues 179–191 (PTTLRGAIGALHQ) are cytoplasmic. Gln-191 is a D-glucose binding site. Residues 192 to 212 (LAIVTGILISQIVGLDFILGN) form a helical membrane-spanning segment. Topologically, residues 213–215 (HEL) are extracellular. Residues 216–236 (WHILLGLSAVPAILQCLLLFF) traverse the membrane as a helical segment. Topologically, residues 237 to 301 (CPESPRYLYI…LFTNASYRQP (65 aa)) are cytoplasmic. The helical transmembrane segment at 302 to 322 (ILVALMLHAAQQFSGINGIFY) threads the bilayer. D-glucose-binding positions include 312-313 (QQ) and Asn-318. At 323 to 336 (YSTSIFQTAGISQP) the chain is on the extracellular side. A helical membrane pass occupies residues 337-357 (VYATIGVGAVNTVFTAVSVFL). Asn-347 is a binding site for D-glucose. Residues 358-365 (VEKAGRRS) are Cytoplasmic-facing. Residues 366 to 386 (LFLIGMSGMFVCAIFMSVGLV) traverse the membrane as a helical segment. The Extracellular portion of the chain corresponds to 387–400 (LLSKFPWMNYVSMT). The chain crosses the membrane as a helical span at residues 401 to 421 (AIFLFVSFFEIGPGPIPWFMV). Glu-410 and Trp-418 together coordinate D-glucose. At 422-431 (AEFFSQGPRP) the chain is on the cytoplasmic side. A helical transmembrane segment spans residues 432 to 452 (AALAIAAFSNWTGNFIIALCF). Residues 453 to 454 (QY) lie on the Extracellular side of the membrane. A helical membrane pass occupies residues 455–475 (IADFCGPYVFFLLLVWSWPLF). Over 476–510 (CSHFLKFQKPKENPLRKSQQSSERRGVQLKRQKLL) the chain is Cytoplasmic. The interval 490-510 (LRKSQQSSERRGVQLKRQKLL) is disordered.

The protein belongs to the major facilitator superfamily. Sugar transporter (TC 2.A.1.1) family. Glucose transporter subfamily. Post-translationally, N-glycosylated; required for stability and retention at the cell surface of pancreatic beta cells.

Its subcellular location is the cell membrane. The enzyme catalyses D-glucose(out) = D-glucose(in). The catalysed reaction is D-fructose(out) = D-fructose(in). It catalyses the reaction L-dehydroascorbate(out) = L-dehydroascorbate(in). It carries out the reaction D-galactose(in) = D-galactose(out). Its activity is regulated as follows. D-glucose and maltose competitively inhibit fructose transport. D-glucose, D-fructose and maltose inhibit deoxyglucose transport. In terms of biological role, facilitative hexose transporter that mediates the transport of glucose, fructose and galactose. Likely mediates the bidirectional transfer of glucose across the plasma membrane of hepatocytes and is responsible for uptake of glucose by the beta cells; may comprise part of the glucose-sensing mechanism of the beta cell. May also participate with the Na(+)/glucose cotransporter in the transcellular transport of glucose in the small intestine and kidney. Also able to mediate the transport of dehydroascorbate. This chain is Solute carrier family 2, facilitated glucose transporter member 2, found in Bos taurus (Bovine).